The following is a 402-amino-acid chain: Elongation factor Tu (402 aa).

A tr-type G domain is found at 10 to 212 (KPHINIGTIG…AVDEYIPEPK (203 aa)). The interval 19 to 26 (GHVDHGKT) is G1. 19 to 26 (GHVDHGKT) contacts GTP. Threonine 26 is a Mg(2+) binding site. The segment at 60 to 64 (GITIA) is G2. Residues 81–84 (DCPG) are G3. Residues 81–85 (DCPGH) and 136–139 (NKED) each bind GTP. The interval 136 to 139 (NKED) is G4. Residues 177-179 (SAF) are G5.

The protein belongs to the TRAFAC class translation factor GTPase superfamily. Classic translation factor GTPase family. EF-Tu/EF-1A subfamily. Monomer.

It localises to the cytoplasm. It carries out the reaction GTP + H2O = GDP + phosphate + H(+). In terms of biological role, GTP hydrolase that promotes the GTP-dependent binding of aminoacyl-tRNA to the A-site of ribosomes during protein biosynthesis. The sequence is that of Elongation factor Tu from Sulfurovum sp. (strain NBC37-1).